A 528-amino-acid polypeptide reads, in one-letter code: (R)-citramalate synthase (528 aa).

Positions 4–266 (VKLYDTTLRD…RECIGDDQLR (263 aa)) constitute a Pyruvate carboxyltransferase domain.

This sequence belongs to the alpha-IPM synthase/homocitrate synthase family.

The catalysed reaction is pyruvate + acetyl-CoA + H2O = (3R)-citramalate + CoA + H(+). It functions in the pathway amino-acid biosynthesis; L-isoleucine biosynthesis; 2-oxobutanoate from pyruvate: step 1/3. In terms of biological role, catalyzes the condensation of pyruvate and acetyl-coenzyme A to form (R)-citramalate. Makes part of the main pathway for isoleucine biosynthesis in G.sulfurreducens, i.e. the citramalate-dependent pathway. The protein is (R)-citramalate synthase of Geobacter sulfurreducens (strain ATCC 51573 / DSM 12127 / PCA).